Here is a 161-residue protein sequence, read N- to C-terminus: Deoxyuridine 5'-triphosphate nucleotidohydrolase (161 aa).

Residues 80-82 (RSG), Asn93, 97-99 (TVD), and Lys107 contribute to the substrate site.

The protein belongs to the dUTPase family. Mg(2+) serves as cofactor.

The enzyme catalyses dUTP + H2O = dUMP + diphosphate + H(+). Its pathway is pyrimidine metabolism; dUMP biosynthesis; dUMP from dCTP (dUTP route): step 2/2. In terms of biological role, this enzyme is involved in nucleotide metabolism: it produces dUMP, the immediate precursor of thymidine nucleotides and it decreases the intracellular concentration of dUTP so that uracil cannot be incorporated into DNA. The chain is Deoxyuridine 5'-triphosphate nucleotidohydrolase from Mesorhizobium japonicum (strain LMG 29417 / CECT 9101 / MAFF 303099) (Mesorhizobium loti (strain MAFF 303099)).